Consider the following 620-residue polypeptide: Synchronized import protein 1 (620 aa).

The interval M1 to V32 is disordered. 8 ARM repeats span residues D25–E64, A66–L106, D181–D221, A258–P299, I340–P386, D435–L470, I471–M510, and R564–S607.

Belongs to the nuclear import and ribosome assembly adapter family. In terms of assembly, forms a heterotrimeric complex with RPL5 and RPL11A or RPL11B; interaction of this complex with KAP104 allows the nuclear import of the heterotrimer. Component of a hexameric 5S RNP precursor complex, composed of 5S RNA, RRS1, RPF2, RPL5, RPL11A/RPL11B and SYO1; this complex acts as a precursor for ribosome assembly.

The protein resides in the cytoplasm. It localises to the nucleus. In terms of biological role, nuclear import adapter that specifically recruits the two functionally and topologically linked ribosomal proteins RPL5 and RPL11 (encoded by RPL11A and RPL11B). Guarantees that this cargo pair remains bound together from the time of synthesis in the cytoplasm until delivery to the nascent 5S rRNA in the nucleus. This Saccharomyces cerevisiae (strain ATCC 204508 / S288c) (Baker's yeast) protein is Synchronized import protein 1 (SYO1).